The following is a 361-amino-acid chain: ETS translocation variant 3-like protein (361 aa).

A DNA-binding region (ETS) is located at residues 39–120; sequence IQLWHFILEL…KGKRFTYKFN (82 aa). Residues 178 to 201 form a disordered region; it reads LTGQQTPRGPPETSGDKKGSSSSV.

Belongs to the ETS family.

It is found in the nucleus. Transcriptional regulator. The sequence is that of ETS translocation variant 3-like protein (ETV3L) from Homo sapiens (Human).